The following is a 655-amino-acid chain: DNA-directed RNA polymerase III subunit rpc3 (655 aa).

Disordered regions lie at residues 153 to 183 (VKAN…SNEQ), 270 to 305 (KRKY…EENE), and 402 to 445 (RLDL…SSGG). A compositionally biased stretch (basic and acidic residues) spans 276–287 (RRADEPNKKPRT). Residues 291-305 (SVDEIDEQDEEEENE) are compositionally biased toward acidic residues. Positions 405–417 (LSSSTGPMDTSQP) are enriched in polar residues. Positions 418–427 (DGRRGKRPLE) are enriched in basic and acidic residues. The interval 582–603 (TYKAMSRCLQRLRFERSRIKDF) is leucine-zipper.

The protein belongs to the RNA polymerase beta chain family. Component of the RNA polymerase III (Pol III) complex consisting of 17 subunits.

Its subcellular location is the nucleus. DNA-dependent RNA polymerase catalyzes the transcription of DNA into RNA using the four ribonucleoside triphosphates as substrates. Specific core component of RNA polymerase III which synthesizes small RNAs, such as 5S rRNA and tRNAs. This Neosartorya fischeri (strain ATCC 1020 / DSM 3700 / CBS 544.65 / FGSC A1164 / JCM 1740 / NRRL 181 / WB 181) (Aspergillus fischerianus) protein is DNA-directed RNA polymerase III subunit rpc3 (rpc82).